The sequence spans 149 residues: Flagellar assembly factor FliW (149 aa).

The protein belongs to the FliW family. In terms of assembly, interacts with translational regulator CsrA and flagellin(s).

The protein resides in the cytoplasm. In terms of biological role, acts as an anti-CsrA protein, binds CsrA and prevents it from repressing translation of its target genes, one of which is flagellin. Binds to flagellin and participates in the assembly of the flagellum. The protein is Flagellar assembly factor FliW of Thermotoga sp. (strain RQ2).